Consider the following 424-residue polypeptide: O-methyltransferase aunD (424 aa).

D275 contributes to the S-adenosyl-L-methionine binding site. Residue H326 is the Proton acceptor of the active site.

This sequence belongs to the class I-like SAM-binding methyltransferase superfamily. Cation-independent O-methyltransferase family.

It participates in secondary metabolite biosynthesis. Its function is as follows. O-methyltransferase; part of the gene cluster that mediates the biosynthesis of aurasperone B, a dimeric gamma-naphthopyrone. The first step in the biosynthesis of aurasperone B is the production of gamma-naphthopyrone precursor YWA1 by the non-reducing polyketide synthase albA, via condensation of one acetyl-CoA starter unit with 6 malonyl-CoA units. YWA1 is then methylated by aunE at position C-6 to yield foncesin which is further methylated at position C-8 by aunD to produce fonsecin B. A key enzyme in the biosynthetic pathway is the cytochrome P450 monooxygenase aunB which catalyzes the oxidative dimerization of fonsecin B to aurasperone B. AunB also catalyzes the oxidative dimerization of rubrofusarin B into aurasperone A. This chain is O-methyltransferase aunD, found in Aspergillus niger (strain ATCC 1015 / CBS 113.46 / FGSC A1144 / LSHB Ac4 / NCTC 3858a / NRRL 328 / USDA 3528.7).